Reading from the N-terminus, the 418-residue chain is Gamma-glutamyl phosphate reductase (418 aa).

The protein belongs to the gamma-glutamyl phosphate reductase family.

The protein localises to the cytoplasm. The catalysed reaction is L-glutamate 5-semialdehyde + phosphate + NADP(+) = L-glutamyl 5-phosphate + NADPH + H(+). The protein operates within amino-acid biosynthesis; L-proline biosynthesis; L-glutamate 5-semialdehyde from L-glutamate: step 2/2. Catalyzes the NADPH-dependent reduction of L-glutamate 5-phosphate into L-glutamate 5-semialdehyde and phosphate. The product spontaneously undergoes cyclization to form 1-pyrroline-5-carboxylate. This is Gamma-glutamyl phosphate reductase from Dechloromonas aromatica (strain RCB).